The following is a 239-amino-acid chain: tRNA1(Val) (adenine(37)-N6)-methyltransferase (239 aa).

It belongs to the methyltransferase superfamily. tRNA (adenine-N(6)-)-methyltransferase family.

It localises to the cytoplasm. It carries out the reaction adenosine(37) in tRNA1(Val) + S-adenosyl-L-methionine = N(6)-methyladenosine(37) in tRNA1(Val) + S-adenosyl-L-homocysteine + H(+). In terms of biological role, specifically methylates the adenine in position 37 of tRNA(1)(Val) (anticodon cmo5UAC). This Trichodesmium erythraeum (strain IMS101) protein is tRNA1(Val) (adenine(37)-N6)-methyltransferase.